Reading from the N-terminus, the 105-residue chain is Small ribosomal subunit protein uS10 (105 aa).

This sequence belongs to the universal ribosomal protein uS10 family. As to quaternary structure, part of the 30S ribosomal subunit.

Functionally, involved in the binding of tRNA to the ribosomes. The chain is Small ribosomal subunit protein uS10 from Trichormus variabilis (strain ATCC 29413 / PCC 7937) (Anabaena variabilis).